A 1043-amino-acid polypeptide reads, in one-letter code: Isoleucine--tRNA ligase (1043 aa).

The 'HIGH' region signature appears at 48 to 58; it reads PFATGLPHYGH. The 'KMSKS' region signature appears at 591-595; it reads KMSKR. Lysine 594 contacts ATP.

This sequence belongs to the class-I aminoacyl-tRNA synthetase family. IleS type 2 subfamily. In terms of assembly, monomer. It depends on Zn(2+) as a cofactor.

The protein localises to the cytoplasm. The catalysed reaction is tRNA(Ile) + L-isoleucine + ATP = L-isoleucyl-tRNA(Ile) + AMP + diphosphate. Its function is as follows. Catalyzes the attachment of isoleucine to tRNA(Ile). As IleRS can inadvertently accommodate and process structurally similar amino acids such as valine, to avoid such errors it has two additional distinct tRNA(Ile)-dependent editing activities. One activity is designated as 'pretransfer' editing and involves the hydrolysis of activated Val-AMP. The other activity is designated 'posttransfer' editing and involves deacylation of mischarged Val-tRNA(Ile). This chain is Isoleucine--tRNA ligase, found in Chlamydia pneumoniae (Chlamydophila pneumoniae).